The chain runs to 63 residues: Beta-glucosidase A-3 (63 aa).

Asp12 is an active-site residue. 2 N-linked (GlcNAc...) asparagine glycosylation sites follow: Asn48 and Asn56.

Belongs to the glycosyl hydrolase 3 family.

It carries out the reaction Hydrolysis of terminal, non-reducing beta-D-glucosyl residues with release of beta-D-glucose.. It participates in glycan metabolism; cellulose degradation. The polypeptide is Beta-glucosidase A-3 (Aspergillus wentii).